A 328-amino-acid polypeptide reads, in one-letter code: Eukaryotic translation initiation factor 3 subunit I (328 aa).

5 WD repeats span residues 8–49 (GHER…GTYR), 50–89 (GHNG…ELFT), 146–185 (DGKK…LLKQ), 191–230 (GHKK…LLKT), and 288–327 (GHFG…FNIK).

The protein belongs to the eIF-3 subunit I family. Component of the eukaryotic translation initiation factor 3 (eIF-3) complex.

It is found in the cytoplasm. In terms of biological role, component of the eukaryotic translation initiation factor 3 (eIF-3) complex, which is involved in protein synthesis of a specialized repertoire of mRNAs and, together with other initiation factors, stimulates binding of mRNA and methionyl-tRNAi to the 40S ribosome. The eIF-3 complex specifically targets and initiates translation of a subset of mRNAs involved in cell proliferation. This chain is Eukaryotic translation initiation factor 3 subunit I (TIF3I1), found in Arabidopsis thaliana (Mouse-ear cress).